A 598-amino-acid chain; its full sequence is MGDYKLAKEAFVSGNPGASIWSINAVSLVALATYALWIALSPYIRHGLLNNYLICVLPLLLGVTIFSTSPLVFASFLSIISLFFIAKSQKRFNFPRSPEKPKGQWLDESDSDEEPAEPASAAGSAAVSPAKLLPSQVAFASGSLLSTDPTISPMSPSSSSSSGHEDPLGIMGVNRRRSPLEGVSLDVPSHIDSKVRISPVPSLRLKKSRATKVQGVEEKGRLPFLTVYRAHMMLMTVICILAVDFEVFPRWQGKCEDFGTSLMDVGVGSFVFSLGLVSTKSLSPPPPPPTPTSPALNSHIIPLTPSPLSFILISLRKSVPVLVLGFIRLIMVKGSDYPEHVTEYGVHWNFFFTLALVPVLAVGVRPLTQWLRWSVLGVIISLLHQLCLTYYLQPIIFSFGRSGIFLANKEGFSSLPGYLSIFLIGLSIGDHVLRLSLPPRRERVVSETIEEHEQSHFERKKLDLIMELIGYSLGWWALLGGWIWAGGEVSRRLANAPYVFWVAAYNTTFLLGYLLLTHIIPSSISSQTSPSILVPRLLDAMNKNGLAVFLAANLLTGLVNVSMETMYAPAWLSMGVLMLYSLAVSCVGWVLKGRSIKI.

3 helical membrane passes run 20–40 (IWSI…WIAL), 43–63 (YIRH…LLGV), and 65–85 (IFST…LFFI). Disordered stretches follow at residues 95 to 121 (PRSP…PASA) and 149 to 172 (PTIS…GIMG). The segment covering 107-116 (DESDSDEEPA) has biased composition (acidic residues). Positions 152–162 (SPMSPSSSSSS) are enriched in low complexity. 7 consecutive transmembrane segments (helical) span residues 223–243 (PFLT…ILAV), 258–278 (FGTS…GLVS), 307–327 (PLSF…LGFI), 344–364 (YGVH…AVGV), 377–397 (GVII…PIIF), 464–484 (LIME…GWIW), and 500–520 (FWVA…THII). Residue Asn560 is glycosylated (N-linked (GlcNAc...) asparagine). Residues 571 to 591 (WLSMGVLMLYSLAVSCVGWVL) form a helical membrane-spanning segment.

This sequence belongs to the PIGW family.

It localises to the endoplasmic reticulum membrane. It participates in glycolipid biosynthesis; glycosylphosphatidylinositol-anchor biosynthesis. Probable acetyltransferase, which acetylates the inositol ring of phosphatidylinositol during biosynthesis of GPI-anchor. This chain is GPI-anchored wall transfer protein 1 (GWT1), found in Cryptococcus neoformans var. neoformans serotype D (strain B-3501A) (Filobasidiella neoformans).